Reading from the N-terminus, the 790-residue chain is Kinesin-like protein KIN-14D (790 aa).

Disordered stretches follow at residues 1-56 (MPLR…DVGS) and 116-139 (DKEN…LDAK). The segment at 1–66 (MPLRNQNRAP…TEECGKVEFT (66 aa)) is globular. Basic and acidic residues predominate over residues 16–33 (VKKEALSSIPFDKRRKET). Residues 34–55 (QGTGRRQVLSTVNRQDANSDVG) show a composition bias toward polar residues. Coiled-coil stretches lie at residues 117–316 (KENL…HVVQ) and 347–426 (SLEE…LELK). Residues 127–139 (AEKRYSDKELDAK) show a composition bias toward basic and acidic residues. Positions 428-769 (NIRVFCRVRP…LRFAARVNAC (342 aa)) constitute a Kinesin motor domain. Position 513 to 520 (513 to 520 (GQTGSGKT)) interacts with ATP.

It belongs to the TRAFAC class myosin-kinesin ATPase superfamily. Kinesin family. KIN-14 subfamily. Slightly expressed in anther lobes with pollen mother cells at anther stage 5. Strongly expressed at anther stage 6 in the tapetum and meiotic cells. Also detected in the gynoecium and the ovule.

It localises to the cytoplasm. The protein localises to the cytoskeleton. Its subcellular location is the phragmoplast. Its function is as follows. Kinesin that supports microtubule movement in an ATP-dependent manner and that functions as a minus-end directed motor as well as a plus-end tracking protein. During mitosis, is involved in early spindle assembly. Participates in the capture of antiparallel interpolar microtubules and helps in generating force to coalign microtubules. The sequence is that of Kinesin-like protein KIN-14D from Arabidopsis thaliana (Mouse-ear cress).